We begin with the raw amino-acid sequence, 264 residues long: FPSVQSNAAAYLQHLCFGDNKIKAEIRRQGGIQLLVDLLDHRMTEVHRSACGALRNLVYGKANDDNKIALKNCGGIPALVRLLRKTTDLEIRELVTGVLWNLSSCDALKMPIIQDALAVLTNAVIIPHSGWENSPLQDDRKIQLHSSQVLRNATGCLRNVSSAGEEARRRMRECDGLTDALLYVIQSALGSSEIDSKTVENCVCILRNLSYRLAAETSQGQHMGTDELDGLLCGEANGKDAESSGCWGKKKKKKKSQDQWDGVG.

4 ARM repeats span residues 20 to 59, 64 to 104, 120 to 162, and 166 to 211; these read NKIKAEIRRQGGIQLLVDLLDHRMTEVHRSACGALRNLVY, DDNK…NLSS, LTNA…NVSS, and EARR…NLSY. The tract at residues 238–264 is disordered; the sequence is GKDAESSGCWGKKKKKKKSQDQWDGVG.

This sequence belongs to the beta-catenin family. As to quaternary structure, binds to E-cadherin at a juxtamembrane site within the cytoplasmic domain. Binds to PSEN1. Interacts with ZBTB33. Interacts with ARHGEF28. Interacts (via the extreme C-terminus) with FRMPD2 (via the PDZ 2 domain). Interacts with PDZD2. Interacts with CDK5. Interacts with CTNBB1. Interacts with GSK3A and GSK3B. Interacts with DNM2. Interacts with CCDC85B. Post-translationally, O-glycosylated. Phosphorylated by CDK5. Phosphorylated by GSK3B. Predominantly expressed in brain; accumulates in cortical neurons (at protein level).

The protein resides in the nucleus. Its subcellular location is the cell junction. It is found in the adherens junction. The protein localises to the cell projection. It localises to the dendrite. The protein resides in the perikaryon. Has a critical role in neuronal development, particularly in the formation and/or maintenance of dendritic spines and synapses. Involved in the regulation of canonical Wnt signaling. It probably acts on beta-catenin turnover, facilitating beta-catenin interaction with GSK3B, phosphorylation, ubiquitination and degradation. May be involved in neuronal cell adhesion and tissue morphogenesis and integrity by regulating adhesion molecules. Functions as a transcriptional activator when bound to ZBTB33. The chain is Catenin delta-2 (Ctnnd2) from Rattus norvegicus (Rat).